Here is a 225-residue protein sequence, read N- to C-terminus: GTP:AMP phosphotransferase, mitochondrial (225 aa).

24 to 29 serves as a coordination point for GTP; sequence GSGKGT. The NMP stretch occupies residues 45–74; the sequence is SSGDILRQEIKSESTLGREATTYIAQGKLL. AMP is bound by residues Ser46, Arg51, 72 to 74, 103 to 106, and Gln110; these read KLL and GFPR. The segment at 144-181 is LID; sequence NRYVHVPSGRVYNLQYNPPKVPGLDDITGEPLTKRLDD. Residues Arg145 and 154-155 each bind GTP; that span reads VY. AMP-binding residues include Arg178 and Arg189. Position 218 (Ser218) interacts with GTP.

This sequence belongs to the adenylate kinase family. AK3 subfamily. In terms of assembly, monomer.

Its subcellular location is the mitochondrion matrix. It catalyses the reaction a ribonucleoside 5'-triphosphate + AMP = a ribonucleoside 5'-diphosphate + ADP. Its function is as follows. Involved in maintaining the homeostasis of cellular nucleotides by catalyzing the interconversion of nucleoside phosphates. Has GTP:AMP phosphotransferase and ITP:AMP phosphotransferase activities. Does not accept ATP as phosphate donor. The sequence is that of GTP:AMP phosphotransferase, mitochondrial from Saccharomyces cerevisiae (strain ATCC 204508 / S288c) (Baker's yeast).